The chain runs to 424 residues: Serpin-Z2A (424 aa).

The RCL stretch occupies residues 370-394 (GTEAAASTACTIRLLSMSYPEDFVA).

It belongs to the serpin family.

Functionally, probable serine protease inhibitor. The chain is Serpin-Z2A from Oryza sativa subsp. japonica (Rice).